The sequence spans 1357 residues: DNA-directed RNA polymerase subunit beta (1357 aa).

It belongs to the RNA polymerase beta chain family. In terms of assembly, the RNAP catalytic core consists of 2 alpha, 1 beta, 1 beta' and 1 omega subunit. When a sigma factor is associated with the core the holoenzyme is formed, which can initiate transcription.

It catalyses the reaction RNA(n) + a ribonucleoside 5'-triphosphate = RNA(n+1) + diphosphate. In terms of biological role, DNA-dependent RNA polymerase catalyzes the transcription of DNA into RNA using the four ribonucleoside triphosphates as substrates. This is DNA-directed RNA polymerase subunit beta from Pseudomonas putida (Arthrobacter siderocapsulatus).